A 153-amino-acid polypeptide reads, in one-letter code: MKIIEGNLTAQGLKVGLVIGRFNSFIVDSLVKGAIDTIVRHGGSEDNIEQVLVPGAFEIPIVAQKMAASGKYDAIVALGAVIRGGTPHFDYVAGECVKGIGQVALNSGVPVSFGVLTVDTIDQAIERAGTKAGNKGEECTLAAIETANVLKQI.

5-amino-6-(D-ribitylamino)uracil contacts are provided by residues Phe22, 56–58, and 80–82; these read AFE and AVI. A (2S)-2-hydroxy-3-oxobutyl phosphate-binding site is contributed by 85-86; sequence GT. The active-site Proton donor is the His88. Phe113 contacts 5-amino-6-(D-ribitylamino)uracil. Arg127 provides a ligand contact to (2S)-2-hydroxy-3-oxobutyl phosphate.

This sequence belongs to the DMRL synthase family. In terms of assembly, forms an icosahedral capsid composed of 60 subunits, arranged as a dodecamer of pentamers.

It catalyses the reaction (2S)-2-hydroxy-3-oxobutyl phosphate + 5-amino-6-(D-ribitylamino)uracil = 6,7-dimethyl-8-(1-D-ribityl)lumazine + phosphate + 2 H2O + H(+). The protein operates within cofactor biosynthesis; riboflavin biosynthesis; riboflavin from 2-hydroxy-3-oxobutyl phosphate and 5-amino-6-(D-ribitylamino)uracil: step 1/2. Functionally, catalyzes the formation of 6,7-dimethyl-8-ribityllumazine by condensation of 5-amino-6-(D-ribitylamino)uracil with 3,4-dihydroxy-2-butanone 4-phosphate. This is the penultimate step in the biosynthesis of riboflavin. This is 6,7-dimethyl-8-ribityllumazine synthase from Hydrogenovibrio crunogenus (strain DSM 25203 / XCL-2) (Thiomicrospira crunogena).